The sequence spans 232 residues: Small ribosomal subunit protein uS3 (232 aa).

The KH type-2 domain occupies 39–107; the sequence is VRRFLEQRLK…PVHVNIEEVR (69 aa).

It belongs to the universal ribosomal protein uS3 family. In terms of assembly, part of the 30S ribosomal subunit. Forms a tight complex with proteins S10 and S14.

Its function is as follows. Binds the lower part of the 30S subunit head. Binds mRNA in the 70S ribosome, positioning it for translation. This Chromohalobacter salexigens (strain ATCC BAA-138 / DSM 3043 / CIP 106854 / NCIMB 13768 / 1H11) protein is Small ribosomal subunit protein uS3.